Consider the following 188-residue polypeptide: MSTPSLDNLIELGAISEAQGLQGQVKVRPHSPDPVALLSSKVVWLSLLPRRSAGALSSTEEATLTQYKVKSAKMHSGNVVLTLDGVSDRDQALALKGARILLDRDAFPKAESDSYYWVDLIGCKAKNLQDEILGDVIDVTENGAHGVIAIGDISTKTIQYLVPFVKEVVRNVDLPNKLLTLDWQSDWV.

A PRC barrel domain is found at 112–187 (SDSYYWVDLI…LLTLDWQSDW (76 aa)).

It belongs to the RimM family. As to quaternary structure, binds ribosomal protein uS19.

It localises to the cytoplasm. Functionally, an accessory protein needed during the final step in the assembly of 30S ribosomal subunit, possibly for assembly of the head region. Essential for efficient processing of 16S rRNA. May be needed both before and after RbfA during the maturation of 16S rRNA. It has affinity for free ribosomal 30S subunits but not for 70S ribosomes. This is Ribosome maturation factor RimM from Polynucleobacter asymbioticus (strain DSM 18221 / CIP 109841 / QLW-P1DMWA-1) (Polynucleobacter necessarius subsp. asymbioticus).